The following is a 169-amino-acid chain: Nucleoside diphosphate kinase 3-A (169 aa).

Residues lysine 29, arginine 105, threonine 111, arginine 122, valine 129, and asparagine 132 each contribute to the ADP site. Histidine 135 (pros-phosphohistidine intermediate) is an active-site residue.

The protein belongs to the NDK family. As to quaternary structure, homohexamer. Requires Mg(2+) as cofactor.

Its subcellular location is the mitochondrion outer membrane. It localises to the cytoplasm. The protein localises to the cytoskeleton. It is found in the cilium basal body. It carries out the reaction a 2'-deoxyribonucleoside 5'-diphosphate + ATP = a 2'-deoxyribonucleoside 5'-triphosphate + ADP. It catalyses the reaction a ribonucleoside 5'-diphosphate + ATP = a ribonucleoside 5'-triphosphate + ADP. Catalyzes the phosphorylation of ribonucleosides and deoxyribonucleoside diphosphates, other than ATP, into the corresponding triphosphates with ATP as the major phosphate donor. The ATP gamma phosphate is transferred to the nucleoside diphosphate beta phosphate via a ping-pong mechanism, using a phosphorylated active-site intermediate. Through the catalyzed exchange of gamma-phosphate between di- and triphosphonucleosides participates in regulation of intracellular nucleotide homeostasis. Required for ciliary function during renal development. Its function is as follows. Independently of its kinase activity, facilitates mitochondrial tethering prior to membrane fusion through its direct membrane-binding and hexamerization. Implicated in repair of both single- and double-stranded breaks in DNA, independently of its kinase activity. This Xenopus laevis (African clawed frog) protein is Nucleoside diphosphate kinase 3-A.